Consider the following 106-residue polypeptide: Small ribosomal subunit protein uS10 (106 aa).

The protein belongs to the universal ribosomal protein uS10 family. As to quaternary structure, part of the 30S ribosomal subunit.

In terms of biological role, involved in the binding of tRNA to the ribosomes. This is Small ribosomal subunit protein uS10 from Prochlorococcus marinus (strain MIT 9515).